The primary structure comprises 190 residues: Protein GrpE (190 aa).

Residues 1 to 26 (MADKEKDAVIVDETEHVDVDSKESKK) are compositionally biased toward basic and acidic residues. The interval 1–31 (MADKEKDAVIVDETEHVDVDSKESKKEKKTK) is disordered.

The protein belongs to the GrpE family. As to quaternary structure, homodimer.

Its subcellular location is the cytoplasm. Participates actively in the response to hyperosmotic and heat shock by preventing the aggregation of stress-denatured proteins, in association with DnaK and GrpE. It is the nucleotide exchange factor for DnaK and may function as a thermosensor. Unfolded proteins bind initially to DnaJ; upon interaction with the DnaJ-bound protein, DnaK hydrolyzes its bound ATP, resulting in the formation of a stable complex. GrpE releases ADP from DnaK; ATP binding to DnaK triggers the release of the substrate protein, thus completing the reaction cycle. Several rounds of ATP-dependent interactions between DnaJ, DnaK and GrpE are required for fully efficient folding. The sequence is that of Protein GrpE from Acholeplasma laidlawii (strain PG-8A).